The following is a 587-amino-acid chain: Arginine--tRNA ligase (587 aa).

Residues Pro-127–His-137 carry the 'HIGH' region motif.

The protein belongs to the class-I aminoacyl-tRNA synthetase family. In terms of assembly, monomer.

It is found in the cytoplasm. The catalysed reaction is tRNA(Arg) + L-arginine + ATP = L-arginyl-tRNA(Arg) + AMP + diphosphate. The sequence is that of Arginine--tRNA ligase from Pseudomonas paraeruginosa (strain DSM 24068 / PA7) (Pseudomonas aeruginosa (strain PA7)).